The following is a 675-amino-acid chain: Zeaxanthin epoxidase, chloroplastic (675 aa).

The transit peptide at 1–25 directs the protein to the chloroplast; the sequence is MASTVLYNSLTTSTTVFLRSHLPIS. FAD is bound by residues 92–120 and 370–383; these read RILV…KVFE and KLTW…LLGD. The 65-residue stretch at 558–622 folds into the FHA domain; the sequence is ICLSRKEDEP…HGTWITDNEG (65 aa).

Requires FAD as cofactor.

Its subcellular location is the plastid. The protein localises to the chloroplast thylakoid membrane. The catalysed reaction is all-trans-zeaxanthin + 4 reduced [2Fe-2S]-[ferredoxin] + 2 O2 + 4 H(+) = all-trans-violaxanthin + 4 oxidized [2Fe-2S]-[ferredoxin] + 2 H2O. Its pathway is plant hormone biosynthesis; abscisate biosynthesis. Inhibited by diphenyleneiodonium (DPI). In terms of biological role, converts zeaxanthin into antheraxanthin and subsequently violaxanthin. Involved in the epoxidation of zeaxanthin. This is Zeaxanthin epoxidase, chloroplastic from Spinacia oleracea (Spinach).